Consider the following 218-residue polypeptide: Riboflavin synthase (218 aa).

2 Lumazine-binding repeats span residues 1–97 and 98–194; these read MFTG…LGGH and LVSG…EKLI. Residues 4–6, 48–50, 62–67, 101–103, K136, 145–147, and 159–164 each bind 2,4-dihydroxypteridine; these read GII, CLT, DLSLET, GHV, SLT, and TIVPHT.

As to quaternary structure, homotrimer.

The catalysed reaction is 2 6,7-dimethyl-8-(1-D-ribityl)lumazine + H(+) = 5-amino-6-(D-ribitylamino)uracil + riboflavin. Its pathway is cofactor biosynthesis; riboflavin biosynthesis; riboflavin from 2-hydroxy-3-oxobutyl phosphate and 5-amino-6-(D-ribitylamino)uracil: step 2/2. In terms of biological role, catalyzes the dismutation of two molecules of 6,7-dimethyl-8-ribityllumazine, resulting in the formation of riboflavin and 5-amino-6-(D-ribitylamino)uracil. This is Riboflavin synthase (ribE) from Photobacterium leiognathi.